A 140-amino-acid polypeptide reads, in one-letter code: Cysteine desulfuration protein SufE (140 aa).

C51 acts as the Cysteine persulfide intermediate in catalysis.

Belongs to the SufE family. Homodimer. Interacts with SufS.

The protein resides in the cytoplasm. It functions in the pathway cofactor biosynthesis; iron-sulfur cluster biosynthesis. Its function is as follows. Participates in cysteine desulfuration mediated by SufS. Cysteine desulfuration mobilizes sulfur from L-cysteine to yield L-alanine and constitutes an essential step in sulfur metabolism for biosynthesis of a variety of sulfur-containing biomolecules. Functions as a sulfur acceptor for SufS, by mediating the direct transfer of the sulfur atom from the S-sulfanylcysteine of SufS, an intermediate product of cysteine desulfuration process. The chain is Cysteine desulfuration protein SufE from Yersinia enterocolitica serotype O:8 / biotype 1B (strain NCTC 13174 / 8081).